The following is a 389-amino-acid chain: Na(+)/H(+) antiporter NhaA (389 aa).

11 helical membrane-spanning segments follow: residues 14–34 (AGGILLLVAVALAMLMANSPL), 59–79 (LILWINDGLMAVFFLLIGLEV), 95–115 (SLPTFAAIGGMLVPAGVYLLF), 124–144 (AGWAIPAATDIAFALGIMALL), 154–174 (VFLLALAIIDDLGVIVIIALF), 177–197 (TDLSTISLVIASLAIAGLVGL), 213–233 (LILWVAVLKSGVHATLAGVII), 257–277 (PWSTFFILPVFAFANAGVYVG), 292–312 (IALGLMLGKPIGVMVFSYIAV), 328–348 (IAPVAAMCGIGFTMSMFIASL), and 363–383 (LGTLIGSIMAALVGYFWLSKV).

Belongs to the NhaA Na(+)/H(+) (TC 2.A.33) antiporter family.

Its subcellular location is the cell inner membrane. It catalyses the reaction Na(+)(in) + 2 H(+)(out) = Na(+)(out) + 2 H(+)(in). Functionally, na(+)/H(+) antiporter that extrudes sodium in exchange for external protons. The chain is Na(+)/H(+) antiporter NhaA from Shewanella baltica (strain OS223).